The primary structure comprises 159 residues: Bacterioferritin (159 aa).

The region spanning 1–145 (MQGDPEVLRL…TQLELMDKLG (145 aa)) is the Ferritin-like diiron domain. Fe cation-binding residues include Glu-18 and Glu-51. Met-52 contacts heme b. Fe cation contacts are provided by His-54, Glu-94, Glu-127, and His-130.

Belongs to the bacterioferritin family. Homooligomer of 24 subunits, arranged as 12 dimers, that are packed together to form an approximately spherical molecule with a central cavity, in which large amounts of iron can be deposited. It depends on heme b as a cofactor.

The catalysed reaction is 4 Fe(2+) + O2 + 4 H(+) = 4 Fe(3+) + 2 H2O. The enzyme catalyses Fe(2+)(in) = Fe(2+)(out). Its function is as follows. Iron-storage protein, whose ferroxidase center binds Fe(2+), oxidizes it using dioxygen to Fe(3+), and participates in the subsequent Fe(3+) oxide mineral core formation within the central cavity of the BFR protein shell. In Mycolicibacterium paratuberculosis (strain ATCC BAA-968 / K-10) (Mycobacterium paratuberculosis), this protein is Bacterioferritin (bfr).